We begin with the raw amino-acid sequence, 345 residues long: Phosphoribosylformylglycinamidine cyclo-ligase (345 aa).

It belongs to the AIR synthase family.

It is found in the cytoplasm. It carries out the reaction 2-formamido-N(1)-(5-O-phospho-beta-D-ribosyl)acetamidine + ATP = 5-amino-1-(5-phospho-beta-D-ribosyl)imidazole + ADP + phosphate + H(+). It functions in the pathway purine metabolism; IMP biosynthesis via de novo pathway; 5-amino-1-(5-phospho-D-ribosyl)imidazole from N(2)-formyl-N(1)-(5-phospho-D-ribosyl)glycinamide: step 2/2. This is Phosphoribosylformylglycinamidine cyclo-ligase from Sodalis glossinidius (strain morsitans).